We begin with the raw amino-acid sequence, 347 residues long: Phosphoribosylformylglycinamidine cyclo-ligase (347 aa).

This sequence belongs to the AIR synthase family.

The protein localises to the cytoplasm. It catalyses the reaction 2-formamido-N(1)-(5-O-phospho-beta-D-ribosyl)acetamidine + ATP = 5-amino-1-(5-phospho-beta-D-ribosyl)imidazole + ADP + phosphate + H(+). It participates in purine metabolism; IMP biosynthesis via de novo pathway; 5-amino-1-(5-phospho-D-ribosyl)imidazole from N(2)-formyl-N(1)-(5-phospho-D-ribosyl)glycinamide: step 2/2. The sequence is that of Phosphoribosylformylglycinamidine cyclo-ligase from Alcanivorax borkumensis (strain ATCC 700651 / DSM 11573 / NCIMB 13689 / SK2).